The primary structure comprises 135 residues: NNCPLDWLPMNGLCYKIFNQLKTWEDAEMFCRKYKPGCHLASFHLYGESLEIAEYISDYHKGQDNVWIGLWDKKKDFSWEWTDRSCIDYLNWNKNQPDHYKNKEFCVELVSLSGYRLWNDQVCESKDAFLCQCKF.

Intrachain disulfides connect cysteine 3-cysteine 14, cysteine 31-cysteine 131, cysteine 38-cysteine 133, and cysteine 106-cysteine 123. Positions 10 to 132 constitute a C-type lectin domain; the sequence is MNGLCYKIFN…CESKDAFLCQ (123 aa). Glutamine 96, aspartate 98, glutamate 104, asparagine 119, and aspartate 120 together coordinate Ca(2+). The short motif at 96 to 98 is the Galactose-binding element; that stretch reads QPD.

Belongs to the true venom lectin family. As to quaternary structure, homodimer; disulfide-linked. In terms of tissue distribution, expressed by the venom gland.

It is found in the secreted. Its function is as follows. Beta-galactoside and N-acetylgalactosamine (GalNAc) specific C-type lectin. This is C-type Lectin CRL from Crotalus ruber ruber (Red diamond rattlesnake).